Consider the following 198-residue polypeptide: Superoxide dismutase [Fe] (198 aa).

Positions 27, 74, 158, and 162 each coordinate Fe cation.

The protein belongs to the iron/manganese superoxide dismutase family. Homodimer. Fe cation is required as a cofactor.

The protein localises to the cytoplasm. It carries out the reaction 2 superoxide + 2 H(+) = H2O2 + O2. In terms of biological role, destroys superoxide anion radicals which are normally produced within the cells and which are toxic to biological systems. The chain is Superoxide dismutase [Fe] (SODB) from Plasmodium falciparum (isolate 3D7).